A 260-amino-acid chain; its full sequence is 3-methyl-2-oxobutanoate hydroxymethyltransferase (260 aa).

Residues aspartate 44 and aspartate 83 each coordinate Mg(2+). Residues 44–45 (DS), aspartate 83, and lysine 113 each bind 3-methyl-2-oxobutanoate. Residue glutamate 115 participates in Mg(2+) binding. Catalysis depends on glutamate 183, which acts as the Proton acceptor.

This sequence belongs to the PanB family. In terms of assembly, homodecamer; pentamer of dimers. It depends on Mg(2+) as a cofactor.

It localises to the cytoplasm. It catalyses the reaction 3-methyl-2-oxobutanoate + (6R)-5,10-methylene-5,6,7,8-tetrahydrofolate + H2O = 2-dehydropantoate + (6S)-5,6,7,8-tetrahydrofolate. It functions in the pathway cofactor biosynthesis; (R)-pantothenate biosynthesis; (R)-pantoate from 3-methyl-2-oxobutanoate: step 1/2. Functionally, catalyzes the reversible reaction in which hydroxymethyl group from 5,10-methylenetetrahydrofolate is transferred onto alpha-ketoisovalerate to form ketopantoate. In Gloeobacter violaceus (strain ATCC 29082 / PCC 7421), this protein is 3-methyl-2-oxobutanoate hydroxymethyltransferase.